The chain runs to 531 residues: Poly(A)-specific ribonuclease PNLDC1 (531 aa).

Asp-28, Glu-30, Asp-271, and Asp-365 together coordinate Mg(2+). Residues 506–526 (ITCLLQVCSIVTTWAMIAFLL) form a helical membrane-spanning segment.

The protein belongs to the CAF1 family. Requires Mg(2+) as cofactor. In terms of tissue distribution, specifically expressed in embryonic stem cells. Highly expressed in testis.

Its subcellular location is the endoplasmic reticulum membrane. The enzyme catalyses Exonucleolytic cleavage of poly(A) to 5'-AMP.. Functionally, 3'-exoribonuclease that has a preference for poly(A) tails of mRNAs, thereby efficiently degrading poly(A) tails. Exonucleolytic degradation of the poly(A) tail is often the first step in the decay of eukaryotic mRNAs and is also used to silence certain maternal mRNAs translationally during oocyte maturation and early embryonic development. May act as a regulator of multipotency in embryonic stem cells. Is a critical factor for proper spermatogenesis, involved in pre-piRNAs processing to generate mature piRNAs. This Mus musculus (Mouse) protein is Poly(A)-specific ribonuclease PNLDC1.